The following is a 123-amino-acid chain: Small ribosomal subunit protein uS12 (123 aa).

A 3-methylthioaspartic acid modification is found at D89.

The protein belongs to the universal ribosomal protein uS12 family. As to quaternary structure, part of the 30S ribosomal subunit. Contacts proteins S8 and S17. May interact with IF1 in the 30S initiation complex.

Its function is as follows. With S4 and S5 plays an important role in translational accuracy. In terms of biological role, interacts with and stabilizes bases of the 16S rRNA that are involved in tRNA selection in the A site and with the mRNA backbone. Located at the interface of the 30S and 50S subunits, it traverses the body of the 30S subunit contacting proteins on the other side and probably holding the rRNA structure together. The combined cluster of proteins S8, S12 and S17 appears to hold together the shoulder and platform of the 30S subunit. The sequence is that of Small ribosomal subunit protein uS12 from Geotalea uraniireducens (strain Rf4) (Geobacter uraniireducens).